The sequence spans 223 residues: Octanoyltransferase (223 aa).

The 180-residue stretch at 35–214 folds into the BPL/LPL catalytic domain; it reads GEARELIWLL…HFPAMLAGLR (180 aa). Substrate is bound by residues 74–81, 145–147, and 158–160; these read RGGRYTYH, AIG, and GFS. Cys-176 functions as the Acyl-thioester intermediate in the catalytic mechanism.

It belongs to the LipB family.

Its subcellular location is the cytoplasm. The catalysed reaction is octanoyl-[ACP] + L-lysyl-[protein] = N(6)-octanoyl-L-lysyl-[protein] + holo-[ACP] + H(+). Its pathway is protein modification; protein lipoylation via endogenous pathway; protein N(6)-(lipoyl)lysine from octanoyl-[acyl-carrier-protein]: step 1/2. Catalyzes the transfer of endogenously produced octanoic acid from octanoyl-acyl-carrier-protein onto the lipoyl domains of lipoate-dependent enzymes. Lipoyl-ACP can also act as a substrate although octanoyl-ACP is likely to be the physiological substrate. The protein is Octanoyltransferase of Rhizorhabdus wittichii (strain DSM 6014 / CCUG 31198 / JCM 15750 / NBRC 105917 / EY 4224 / RW1) (Sphingomonas wittichii).